We begin with the raw amino-acid sequence, 520 residues long: Amine oxidase [flavin-containing] B (520 aa).

An N-acetylserine modification is found at serine 2. Topologically, residues 2–489 (SNKCDVIVVG…TFLERHLPSV (488 aa)) are cytoplasmic. Lysine 52 carries the post-translational modification N6-acetyllysine. Cysteine 397 carries the S-8alpha-FAD cysteine modification. A helical; Anchor for type IV membrane protein transmembrane segment spans residues 490-516 (PGLLKLLGLTTILSATALGFLAHKKGL). At 517-520 (FVRF) the chain is on the mitochondrial intermembrane side.

The protein belongs to the flavin monoamine oxidase family. In terms of assembly, monomer, homo- or heterodimer (containing two subunits of similar size). Each subunit contains a covalently bound flavin. Enzymatically active as monomer. It depends on FAD as a cofactor.

It localises to the mitochondrion outer membrane. The enzyme catalyses a secondary aliphatic amine + O2 + H2O = a primary amine + an aldehyde + H2O2. It carries out the reaction (R)-adrenaline + O2 + H2O = (R)-3,4-dihydroxymandelaldehyde + methylamine + H2O2. It catalyses the reaction a primary methyl amine + O2 + H2O = an aldehyde + H2O2 + NH4(+). The catalysed reaction is dopamine + O2 + H2O = 3,4-dihydroxyphenylacetaldehyde + H2O2 + NH4(+). The enzyme catalyses tyramine + O2 + H2O = (4-hydroxyphenyl)acetaldehyde + H2O2 + NH4(+). It carries out the reaction (R)-noradrenaline + O2 + H2O = (R)-3,4-dihydroxymandelaldehyde + H2O2 + NH4(+). It catalyses the reaction benzylamine + O2 + H2O = benzaldehyde + H2O2 + NH4(+). The catalysed reaction is 2-phenylethylamine + O2 + H2O = 2-phenylacetaldehyde + H2O2 + NH4(+). The enzyme catalyses N-acetylputrescine + O2 + H2O = 4-acetamidobutanal + H2O2 + NH4(+). In terms of biological role, catalyzes the oxidative deamination of primary and some secondary amines such as neurotransmitters, and exogenous amines including the tertiary amine, neurotoxin 1-methyl-4-phenyl-1,2,3,6-tetrahydropyridine (MPTP), with concomitant reduction of oxygen to hydrogen peroxide and participates in the metabolism of neuroactive and vasoactive amines in the central nervous system and peripheral tissues. Preferentially degrades benzylamine and phenylethylamine. This chain is Amine oxidase [flavin-containing] B, found in Rattus norvegicus (Rat).